The chain runs to 634 residues: Chaperone protein dnaK2 (634 aa).

Thr-197 is modified (phosphothreonine; by autocatalysis). A compositionally biased stretch (low complexity) spans 601–620 (SAEASANAQAGPSSSSSSSS). The interval 601–634 (SAEASANAQAGPSSSSSSSSGDDDVIDAEFSESK) is disordered. Acidic residues predominate over residues 621 to 634 (GDDDVIDAEFSESK).

The protein belongs to the heat shock protein 70 family.

Its function is as follows. Acts as a chaperone. In Synechococcus elongatus (strain ATCC 33912 / PCC 7942 / FACHB-805) (Anacystis nidulans R2), this protein is Chaperone protein dnaK2 (dnaK2).